Reading from the N-terminus, the 263-residue chain is UPF0739 protein C1orf74 homolog (263 aa).

The protein belongs to the UPF0739 family.

The protein is UPF0739 protein C1orf74 homolog of Bos taurus (Bovine).